A 326-amino-acid chain; its full sequence is Phosphate acyltransferase (326 aa).

The protein belongs to the PlsX family. In terms of assembly, homodimer. Probably interacts with PlsY.

It localises to the cytoplasm. The enzyme catalyses a fatty acyl-[ACP] + phosphate = an acyl phosphate + holo-[ACP]. The protein operates within lipid metabolism; phospholipid metabolism. Functionally, catalyzes the reversible formation of acyl-phosphate (acyl-PO(4)) from acyl-[acyl-carrier-protein] (acyl-ACP). This enzyme utilizes acyl-ACP as fatty acyl donor, but not acyl-CoA. In Macrococcus caseolyticus (strain JCSC5402) (Macrococcoides caseolyticum), this protein is Phosphate acyltransferase.